The chain runs to 316 residues: Ribosomal RNA small subunit methyltransferase H (316 aa).

Residues 35–37 (AGH), aspartate 55, phenylalanine 84, aspartate 105, and glutamine 112 each bind S-adenosyl-L-methionine.

Belongs to the methyltransferase superfamily. RsmH family.

It is found in the cytoplasm. It catalyses the reaction cytidine(1402) in 16S rRNA + S-adenosyl-L-methionine = N(4)-methylcytidine(1402) in 16S rRNA + S-adenosyl-L-homocysteine + H(+). Its function is as follows. Specifically methylates the N4 position of cytidine in position 1402 (C1402) of 16S rRNA. This Streptococcus thermophilus (strain ATCC BAA-250 / LMG 18311) protein is Ribosomal RNA small subunit methyltransferase H.